Here is a 250-residue protein sequence, read N- to C-terminus: MVKIAFGSIGDSFSVASIKAYVAEFIATLLFVFAGVGSAIAYNKLTSDAALDPAGLVAVAVAHAFALFVGVSMAANVSGGHLNPAVTLGLAVGGNITILTGLFYWIAQCLGSTVACLLLKFVTNGLSVPTHGVAAGMDAIQGVVMEIIITFALVYTVYATAADPKKGSLGVIAPIAIGFIVGANILAAGPFSGGSMNPARSFGPAVASGDFSQNWIYWAGPLIGGALAGFIYGDVFITAHAPLPTSEDYA.

2 helical membrane-spanning segments follow: residues 20–42 (AYVA…AIAY) and 55–77 (GLVA…AANV). The NPA 1 signature appears at 83–85 (NPA). A run of 3 helical transmembrane segments spans residues 97-119 (TILT…CLLL), 140-162 (IQGV…ATAA), and 172-194 (IAPI…FSGG). Residues 197–199 (NPA) carry the NPA 2 motif. Residues 215–237 (WIYWAGPLIGGALAGFIYGDVFI) traverse the membrane as a helical segment.

This sequence belongs to the MIP/aquaporin (TC 1.A.8) family. TIP (TC 1.A.8.10) subfamily. As to expression, expressed in mature seeds and dark-grown seedlings.

The protein localises to the vacuole membrane. Its function is as follows. Channel protein in tonoplast. These proteins may allow the diffusion of amino acids and/or peptides from the vacuolar compartment to the cytoplasm. The chain is Probable aquaporin TIP-type (DIP) from Antirrhinum majus (Garden snapdragon).